The following is a 434-amino-acid chain: Serine hydroxymethyltransferase (434 aa).

(6S)-5,6,7,8-tetrahydrofolate contacts are provided by residues Leu132 and 136 to 138 (GHL). At Lys241 the chain carries N6-(pyridoxal phosphate)lysine.

It belongs to the SHMT family. Homodimer. Pyridoxal 5'-phosphate serves as cofactor.

Its subcellular location is the cytoplasm. It catalyses the reaction (6R)-5,10-methylene-5,6,7,8-tetrahydrofolate + glycine + H2O = (6S)-5,6,7,8-tetrahydrofolate + L-serine. It participates in one-carbon metabolism; tetrahydrofolate interconversion. The protein operates within amino-acid biosynthesis; glycine biosynthesis; glycine from L-serine: step 1/1. Functionally, catalyzes the reversible interconversion of serine and glycine with tetrahydrofolate (THF) serving as the one-carbon carrier. This reaction serves as the major source of one-carbon groups required for the biosynthesis of purines, thymidylate, methionine, and other important biomolecules. Also exhibits THF-independent aldolase activity toward beta-hydroxyamino acids, producing glycine and aldehydes, via a retro-aldol mechanism. This chain is Serine hydroxymethyltransferase, found in Kineococcus radiotolerans (strain ATCC BAA-149 / DSM 14245 / SRS30216).